A 321-amino-acid polypeptide reads, in one-letter code: Mas-related G-protein coupled receptor member D (321 aa).

Residues methionine 1–serine 8 lie on the Extracellular side of the membrane. N-linked (GlcNAc...) asparagine glycosylation occurs at asparagine 2. The helical transmembrane segment at proline 9 to valine 29 threads the bilayer. A topological domain (cytoplasmic) is located at residue threonine 30. Residues phenylalanine 31–leucine 51 traverse the membrane as a helical segment. Residues serine 52–aspartate 72 lie on the Extracellular side of the membrane. The helical transmembrane segment at phenylalanine 73–valine 93 threads the bilayer. Topologically, residues asparagine 94–valine 146 are cytoplasmic. A helical transmembrane segment spans residues valine 147–valine 167. At glutamine 168 to aspartate 181 the chain is on the extracellular side. The chain crosses the membrane as a helical span at residues isoleucine 182–isoleucine 202. Residues leucine 203–arginine 220 are Cytoplasmic-facing. The chain crosses the membrane as a helical span at residues leucine 221–isoleucine 241. At asparagine 242–serine 260 the chain is on the extracellular side. The chain crosses the membrane as a helical span at residues cysteine 261–valine 281. Residues glycine 282–valine 321 are Cytoplasmic-facing. Residues arginine 302–glutamate 311 are compositionally biased toward basic and acidic residues. A disordered region spans residues arginine 302 to valine 321. The span at threonine 312–valine 321 shows a compositional bias: polar residues.

This sequence belongs to the G-protein coupled receptor 1 family. Mas subfamily. In terms of tissue distribution, expressed in a subset of sensory neurons that includes nociceptors. Expressed in the subclass of non-peptidergic sensory neurons that are IB4(+) and VR1(-).

The protein localises to the cell membrane. Functionally, may regulate nociceptor function and/or development, including the sensation or modulation of pain. Functions as a specific membrane receptor for beta-alanine. The receptor couples with G-protein G(q) and G(i). The chain is Mas-related G-protein coupled receptor member D (Mrgprd) from Mus musculus (Mouse).